We begin with the raw amino-acid sequence, 549 residues long: Movement protein Hsp70h (549 aa).

The protein belongs to the heat shock protein 70 family.

It is found in the virion. Functionally, transports viral genome to neighboring plant cells directly through plasmosdesmata, without any budding. The movement protein allows efficient cell to cell propagation, by bypassing the host cell wall barrier. Two movement proteins, p6, Hsp70h and three structural proteins, CP, CPm, and P64 are essential for cell-cell movement. Also plays a role in virion formation. Together with CPm and p64, encapsidates the 5'-terminal portion of the viral genome. The protein is Movement protein Hsp70h of Vitis vinifera (Grape).